The following is a 571-amino-acid chain: Pectinesterase/pectinesterase inhibitor (571 aa).

Residues 27–178 are pectinesterase inhibitor; it reads NSHQKAVESL…KILSSNAIDI (152 aa). The disordered stretch occupies residues 233–254; the sequence is AQAGRPGAPADEGIGEGGGGGG. The segment at 259–558 is pectinesterase; the sequence is THVVAKDGSG…TVANWLTPAN (300 aa). 2 residues coordinate substrate: threonine 336 and glutamine 366. The active-site Proton donor; for pectinesterase activity is aspartate 389. The active-site Nucleophile; for pectinesterase activity is the aspartate 410. Positions 479 and 481 each coordinate substrate.

This sequence in the N-terminal section; belongs to the PMEI family. It in the C-terminal section; belongs to the pectinesterase family.

It localises to the secreted. Its subcellular location is the cell wall. It catalyses the reaction [(1-&gt;4)-alpha-D-galacturonosyl methyl ester](n) + n H2O = [(1-&gt;4)-alpha-D-galacturonosyl](n) + n methanol + n H(+). Its pathway is glycan metabolism; pectin degradation; 2-dehydro-3-deoxy-D-gluconate from pectin: step 1/5. Functionally, acts in the modification of cell walls via demethylesterification of cell wall pectin. This chain is Pectinesterase/pectinesterase inhibitor, found in Brassica campestris (Field mustard).